Reading from the N-terminus, the 290-residue chain is Inositol monophosphatase 2 (290 aa).

Mg(2+)-binding residues include Glu83, Asp103, Ile105, and Asp106. Glu83 contacts substrate. Substrate contacts are provided by residues 105–108 (IDGT), 207–209 (GSS), Gln226, and Asp233. Asp233 is a binding site for Mg(2+).

It belongs to the inositol monophosphatase superfamily. Homodimer. Mg(2+) serves as cofactor. As to expression, mostly expressed in brain, small intestine, heart, kidney, and spleen (at protein level).

It is found in the cytoplasm. The catalysed reaction is a myo-inositol phosphate + H2O = myo-inositol + phosphate. The enzyme catalyses 1D-myo-inositol 1-phosphate + H2O = myo-inositol + phosphate. It carries out the reaction 1D-myo-inositol 2-phosphate + H2O = myo-inositol + phosphate. It catalyses the reaction 1D-myo-inositol 3-phosphate + H2O = myo-inositol + phosphate. The catalysed reaction is 1D-myo-inositol 4-phosphate + H2O = myo-inositol + phosphate. The enzyme catalyses 1D-myo-inositol 5-phosphate + H2O = myo-inositol + phosphate. It carries out the reaction 1D-myo-inositol 6-phosphate + H2O = myo-inositol + phosphate. It catalyses the reaction alpha-D-glucose 1-phosphate + H2O = D-glucose + phosphate. The catalysed reaction is glycerol 2-phosphate + H2O = glycerol + phosphate. The enzyme catalyses adenosine 2'-phosphate + H2O = adenosine + phosphate. It functions in the pathway polyol metabolism; myo-inositol biosynthesis; myo-inositol from D-glucose 6-phosphate: step 2/2. In terms of biological role, phosphatase that can use myo-inositol monophosphates, myo-inositol 1,4-diphosphate, scyllo-inositol-1,4-diphosphate, glucose-1-phosphate, beta-glycerophosphate and 2'-AMP as substrates in vitro. No physiological substrates has been described yet. Has been implicated as the pharmacological target for lithium Li(+) action in brain. The sequence is that of Inositol monophosphatase 2 from Mus musculus (Mouse).